Consider the following 205-residue polypeptide: Methylthioribulose-1-phosphate dehydratase (205 aa).

2 residues coordinate Zn(2+): His96 and His98.

The protein belongs to the aldolase class II family. MtnB subfamily. Zn(2+) is required as a cofactor.

The catalysed reaction is 5-(methylsulfanyl)-D-ribulose 1-phosphate = 5-methylsulfanyl-2,3-dioxopentyl phosphate + H2O. Its pathway is amino-acid biosynthesis; L-methionine biosynthesis via salvage pathway; L-methionine from S-methyl-5-thio-alpha-D-ribose 1-phosphate: step 2/6. Functionally, catalyzes the dehydration of methylthioribulose-1-phosphate (MTRu-1-P) into 2,3-diketo-5-methylthiopentyl-1-phosphate (DK-MTP-1-P). This chain is Methylthioribulose-1-phosphate dehydratase, found in Pseudomonas aeruginosa (strain UCBPP-PA14).